A 430-amino-acid chain; its full sequence is Divergent protein kinase domain 2A (430 aa).

A signal peptide spans 1–35 (MWRLVPLKLGRLSRALKLAALGSLLVLMLLHSPSL).

The protein belongs to the DIPK family. In terms of tissue distribution, expressed in heart, brain, liver, spleen, kidney, lung, thymus, testis, ovary and muscle.

It localises to the golgi apparatus. Its subcellular location is the cytoplasmic vesicle. It is found in the COPI-coated vesicle. The protein resides in the secreted. May play a role in cardiomyocyte proliferation through paracrine signaling and activation of the PI3-kinase signaling cascade. The sequence is that of Divergent protein kinase domain 2A (Dipk2a) from Mus musculus (Mouse).